The primary structure comprises 259 residues: Insulin-induced gene 1 protein (259 aa).

Over 1–66 (MPRLHDHVWN…ARPGSWHHDL (66 aa)) the chain is Cytoplasmic. Positions 36–55 (PGVPEPEHAPRGQRAGTTGC) are disordered. The chain crosses the membrane as a helical span at residues 67 to 89 (VQRSLVLFSFGVVLALVLNLLQI). Residues 90–108 (QRNVTLFPDEVIATIFSSA) are Extracellular-facing. The helical transmembrane segment at 109 to 126 (WWVPPCCGTAAAVVGLLY) threads the bilayer. At 127–141 (PCIDSHLGEPHKFKR) the chain is on the cytoplasmic side. Residues Lys-138 and Lys-140 each participate in a glycyl lysine isopeptide (Lys-Gly) (interchain with G-Cter in ubiquitin) cross-link. A helical membrane pass occupies residues 142–164 (EWASVMRCIAVFVGINHASAKLD). Over 165-167 (FAN) the chain is Extracellular. The helical transmembrane segment at 168-186 (NVQLSLTLAALSLGLWWTF) threads the bilayer. Residues 187–191 (DRSRS) lie on the Cytoplasmic side of the membrane. Ser-189 carries the phosphoserine modification. The chain crosses the membrane as a helical span at residues 192 to 213 (GLGLGITIAFLATLITQFLVYN). Over 214–227 (GVYQYTSPDFLYIR) the chain is Extracellular. The helical transmembrane segment at 228–245 (SWLPCIFFSGGVTVGNIG) threads the bilayer. At 246-259 (RQLAMGVPEKPHSD) the chain is on the cytoplasmic side. The KxHxx motif lies at 253–259 (PEKPHSD).

The protein belongs to the INSIG family. As to quaternary structure, interacts with SCAP; interaction is direct and only takes place in the presence of sterols; it prevents interaction between SCAP and the coat protein complex II (COPII). Associates with the SCAP-SREBP complex (composed of SCAP and SREBF1/SREBP1 or SREBF2/SREBP2); association is mediated via its interaction with SCAP and only takes place in the presence of sterols. Interaction with SCAP is mutually exclusive with PAQR3. Interacts with HMGCR (via its SSD); the interaction, accelerated by sterols, leads to the recruitment of HMGCR to AMFR/gp78 for its ubiquitination by the sterol-mediated ERAD pathway. Interacts with AMFR/gp78 (via its membrane domain); the interaction recruits HMCR at the ER membrane for its ubiquitination and degradation by the sterol-mediated ERAD pathway. Interacts with SOAT2/ACAT2; leading to promote recruitment of AMFR/gp78 and subsequent ubiquitination of SOAT2/ACAT2. Interacts with RNF139. Interacts with RNF145. In terms of processing, phosphorylation at Ser-189 by PCK1 reduces binding to oxysterol, disrupting the interaction between INSIG1 and SCAP, thereby promoting nuclear translocation of SREBP proteins (SREBF1/SREBP1 or SREBF2/SREBP2) and subsequent transcription of downstream lipogenesis-related genes. Ubiquitinated by AMFR/gp78 in response to sterol deprivation, leading to its degradation: when the SCAP-SREBP complex becomes dissociated from INSIG1, INSIG1 is then ubiquitinated and degraded in proteasomes. Although ubiquitination is required for rapid INSIG1 degradation, it is not required for release of the SCAP-SREBP complex. Ubiquitinated by RNF139.

It localises to the endoplasmic reticulum membrane. Functionally, oxysterol-binding protein that mediates feedback control of cholesterol synthesis by controlling both endoplasmic reticulum to Golgi transport of SCAP and degradation of HMGCR. Acts as a negative regulator of cholesterol biosynthesis by mediating the retention of the SCAP-SREBP complex in the endoplasmic reticulum, thereby blocking the processing of sterol regulatory element-binding proteins (SREBPs) SREBF1/SREBP1 and SREBF2/SREBP2. Binds oxysterol, including 25-hydroxycholesterol, regulating interaction with SCAP and retention of the SCAP-SREBP complex in the endoplasmic reticulum. In presence of oxysterol, interacts with SCAP, retaining the SCAP-SREBP complex in the endoplasmic reticulum, thereby preventing SCAP from escorting SREBF1/SREBP1 and SREBF2/SREBP2 to the Golgi. Sterol deprivation or phosphorylation by PCK1 reduce oxysterol-binding, disrupting the interaction between INSIG1 and SCAP, thereby promoting Golgi transport of the SCAP-SREBP complex, followed by processing and nuclear translocation of SREBF1/SREBP1 and SREBF2/SREBP2. Also regulates cholesterol synthesis by regulating degradation of HMGCR: initiates the sterol-mediated ubiquitin-mediated endoplasmic reticulum-associated degradation (ERAD) of HMGCR via recruitment of the reductase to the ubiquitin ligases AMFR/gp78 and/or RNF139. Also regulates degradation of SOAT2/ACAT2 when the lipid levels are low: initiates the ubiquitin-mediated degradation of SOAT2/ACAT2 via recruitment of the ubiquitin ligases AMFR/gp78. This chain is Insulin-induced gene 1 protein, found in Mus musculus (Mouse).